A 117-amino-acid polypeptide reads, in one-letter code: Protein Wnt-6 (117 aa).

A lipid anchor (O-palmitoleoyl serine; by PORCN) is attached at S1. Cysteines 83 and 98 form a disulfide. Residue N84 is glycosylated (N-linked (GlcNAc...) asparagine).

The protein belongs to the Wnt family. In terms of processing, palmitoleoylation is required for efficient binding to frizzled receptors. Depalmitoleoylation leads to Wnt signaling pathway inhibition.

It is found in the secreted. The protein resides in the extracellular space. The protein localises to the extracellular matrix. Functionally, ligand for members of the frizzled family of seven transmembrane receptors. Probable developmental protein. May be a signaling molecule which affects the development of discrete regions of tissues. Is likely to signal over only few cell diameters. This is Protein Wnt-6 (WNT-6) from Strongylocentrotus purpuratus (Purple sea urchin).